The sequence spans 437 residues: UPF0597 protein Shal_0864 (437 aa).

The protein belongs to the UPF0597 family.

This is UPF0597 protein Shal_0864 from Shewanella halifaxensis (strain HAW-EB4).